The following is a 341-amino-acid chain: Serpentine receptor class alpha-28 (341 aa).

7 helical membrane-spanning segments follow: residues 25–45 (FIISIIIISFFTTTKSVRVLL), 57–77 (LLFSAIINGIIHQCVTAVIRL), 107–129 (YYYTNLFSSFCCFSLFLDRLFSF), 142–162 (ASIVLILSQIVLPIGPLYWVF), 188–208 (VNNIRICVLIVLLFFAIFLYI), 242–262 (IVIFSQILCVGPTSSITSVFI), and 275–295 (LIISYLTGLTYSNFLLPLIIL).

This sequence belongs to the nematode receptor-like protein sra family.

Its subcellular location is the membrane. In Caenorhabditis elegans, this protein is Serpentine receptor class alpha-28 (sra-28).